Consider the following 380-residue polypeptide: Succinyl-diaminopimelate desuccinylase (380 aa).

His69 provides a ligand contact to Zn(2+). Asp71 is a catalytic residue. Asp102 is a binding site for Zn(2+). Glu136 functions as the Proton acceptor in the catalytic mechanism. Zn(2+)-binding residues include Glu137, Glu165, and His351.

This sequence belongs to the peptidase M20A family. DapE subfamily. As to quaternary structure, homodimer. Requires Zn(2+) as cofactor. It depends on Co(2+) as a cofactor.

The catalysed reaction is N-succinyl-(2S,6S)-2,6-diaminopimelate + H2O = (2S,6S)-2,6-diaminopimelate + succinate. Its pathway is amino-acid biosynthesis; L-lysine biosynthesis via DAP pathway; LL-2,6-diaminopimelate from (S)-tetrahydrodipicolinate (succinylase route): step 3/3. Its function is as follows. Catalyzes the hydrolysis of N-succinyl-L,L-diaminopimelic acid (SDAP), forming succinate and LL-2,6-diaminopimelate (DAP), an intermediate involved in the bacterial biosynthesis of lysine and meso-diaminopimelic acid, an essential component of bacterial cell walls. The chain is Succinyl-diaminopimelate desuccinylase from Bordetella petrii (strain ATCC BAA-461 / DSM 12804 / CCUG 43448).